A 61-amino-acid chain; its full sequence is Large ribosomal subunit protein bL32 (61 aa).

Residues 1-20 (MAVQKSKPSRAKRGKRRSHD) are disordered. Residues 7–19 (KPSRAKRGKRRSH) are compositionally biased toward basic residues.

Belongs to the bacterial ribosomal protein bL32 family.

In Buchnera aphidicola subsp. Cinara cedri (strain Cc), this protein is Large ribosomal subunit protein bL32.